The chain runs to 367 residues: Anthranilate phosphoribosyltransferase (367 aa).

The span at Met-1–Ala-17 shows a compositional bias: low complexity. The disordered stretch occupies residues Met-1 to Ser-22. Residues Gly-104, Gly-107–Asp-108, Thr-112, Asn-114–Thr-117, Lys-132–Ser-140, and Gly-144 each bind 5-phospho-alpha-D-ribose 1-diphosphate. Gly-104 is a binding site for anthranilate. Mg(2+) is bound at residue Ser-116. Asn-135 lines the anthranilate pocket. Arg-190 is an anthranilate binding site. Mg(2+) is bound by residues Asp-248 and Glu-249.

The protein belongs to the anthranilate phosphoribosyltransferase family. Homodimer. Mg(2+) serves as cofactor.

It carries out the reaction N-(5-phospho-beta-D-ribosyl)anthranilate + diphosphate = 5-phospho-alpha-D-ribose 1-diphosphate + anthranilate. It participates in amino-acid biosynthesis; L-tryptophan biosynthesis; L-tryptophan from chorismate: step 2/5. Its function is as follows. Catalyzes the transfer of the phosphoribosyl group of 5-phosphorylribose-1-pyrophosphate (PRPP) to anthranilate to yield N-(5'-phosphoribosyl)-anthranilate (PRA). The protein is Anthranilate phosphoribosyltransferase of Mycobacterium ulcerans (strain Agy99).